The following is a 573-amino-acid chain: Urease subunit alpha (573 aa).

His139, His141, and Lys222 together coordinate Ni(2+). N6-carboxylysine is present on Lys222. Position 224 (His224) interacts with substrate. 2 residues coordinate Ni(2+): His251 and His277. Residue His325 is the Proton donor of the active site. Asp365 is a binding site for Ni(2+).

The protein belongs to the metallo-dependent hydrolases superfamily. Urease alpha subunit family. As to quaternary structure, heterotrimer of UreA (gamma), UreB (beta) and UreC (alpha) subunits. Three heterotrimers associate to form the active enzyme. Ni cation serves as cofactor. Post-translationally, carboxylation allows a single lysine to coordinate two nickel ions.

The protein resides in the cytoplasm. It carries out the reaction urea + 2 H2O + H(+) = hydrogencarbonate + 2 NH4(+). Its pathway is nitrogen metabolism; urea degradation; CO(2) and NH(3) from urea (urease route): step 1/1. The sequence is that of Urease subunit alpha from Flavobacterium johnsoniae (strain ATCC 17061 / DSM 2064 / JCM 8514 / BCRC 14874 / CCUG 350202 / NBRC 14942 / NCIMB 11054 / UW101) (Cytophaga johnsonae).